Reading from the N-terminus, the 528-residue chain is GTPase Obg (528 aa).

The Obg domain maps to 2–159; it reads ASFVDRVVLH…SDIVLELKSI (158 aa). One can recognise an OBG-type G domain in the interval 160–343; that stretch reads ADIALVGFPS…LGFAMAEIVQ (184 aa). Residues 166 to 173, 191 to 195, 212 to 215, 295 to 298, and 324 to 326 each bind GTP; these read GFPSAGKS, FTTLI, DVPG, NKVD, and SAT. Ser-173 and Thr-193 together coordinate Mg(2+). Residues 363 to 447 enclose the OCT domain; that stretch reads PRAVNESGFK…DDGVVFDWEP (85 aa). A disordered region spans residues 471–490; it reads DRPTRSQKRDEQIERREAKA.

This sequence belongs to the TRAFAC class OBG-HflX-like GTPase superfamily. OBG GTPase family. As to quaternary structure, monomer. Mg(2+) serves as cofactor.

It is found in the cytoplasm. In terms of biological role, an essential GTPase which binds GTP, GDP and possibly (p)ppGpp with moderate affinity, with high nucleotide exchange rates and a fairly low GTP hydrolysis rate. Plays a role in control of the cell cycle, stress response, ribosome biogenesis and in those bacteria that undergo differentiation, in morphogenesis control. The chain is GTPase Obg from Paenarthrobacter aurescens (strain TC1).